A 157-amino-acid chain; its full sequence is Ribosome maturation factor RimP (157 aa).

The protein belongs to the RimP family.

It localises to the cytoplasm. Required for maturation of 30S ribosomal subunits. The protein is Ribosome maturation factor RimP of Thermosynechococcus vestitus (strain NIES-2133 / IAM M-273 / BP-1).